The following is a 63-amino-acid chain: Large ribosomal subunit protein uL30 (63 aa).

This sequence belongs to the universal ribosomal protein uL30 family. Part of the 50S ribosomal subunit.

The chain is Large ribosomal subunit protein uL30 from Hahella chejuensis (strain KCTC 2396).